A 148-amino-acid polypeptide reads, in one-letter code: UPF0591 membrane protein C15E1.02c (148 aa).

3 helical membrane passes run A14–M34, L80–A102, and I122–G142.

Belongs to the UPF0591 family.

It localises to the membrane. This Schizosaccharomyces pombe (strain 972 / ATCC 24843) (Fission yeast) protein is UPF0591 membrane protein C15E1.02c.